A 257-amino-acid polypeptide reads, in one-letter code: Glucose-1-phosphate cytidylyltransferase (257 aa).

Residues 6–10 (LAGGL), 11–13 (GTR), Lys-23, Ser-104, Arg-109, and Gly-128 each bind substrate. Residues Asp-129 and Asp-234 each contribute to the Mg(2+) site.

This sequence belongs to the glucose-1-phosphate cytidylyltransferase family. Homohexamer. It depends on Mg(2+) as a cofactor.

It catalyses the reaction alpha-D-glucose 1-phosphate + CTP + H(+) = CDP-D-glucose + diphosphate. The protein operates within nucleotide-sugar biosynthesis; CDP-3,6-dideoxy-D-mannose biosynthesis; CDP-3,6-dideoxy-D-mannose from CTP and alpha-D-glucose 1-phosphate: step 1/5. It participates in bacterial outer membrane biogenesis; LPS O-antigen biosynthesis. Involved in the biosynthesis of the tyvelose, a 3,6-dideoxyhexose found in the O-antigen of the surface lipopolysaccharides. It catalyzes the transfer of a CMP moiety from CTP to glucose 1-phosphate. The chain is Glucose-1-phosphate cytidylyltransferase (rfbF) from Salmonella typhimurium (strain LT2 / SGSC1412 / ATCC 700720).